The sequence spans 340 residues: Anthranilate phosphoribosyltransferase (340 aa).

Residues glycine 78, 81–82 (GD), threonine 86, 88–91 (NIST), 106–114 (KHGNRSVSS), and serine 118 contribute to the 5-phospho-alpha-D-ribose 1-diphosphate site. Glycine 78 contributes to the anthranilate binding site. Serine 90 is a Mg(2+) binding site. An anthranilate-binding site is contributed by asparagine 109. Arginine 164 contributes to the anthranilate binding site. 2 residues coordinate Mg(2+): aspartate 223 and glutamate 224.

This sequence belongs to the anthranilate phosphoribosyltransferase family. As to quaternary structure, homodimer. Mg(2+) serves as cofactor.

It carries out the reaction N-(5-phospho-beta-D-ribosyl)anthranilate + diphosphate = 5-phospho-alpha-D-ribose 1-diphosphate + anthranilate. It functions in the pathway amino-acid biosynthesis; L-tryptophan biosynthesis; L-tryptophan from chorismate: step 2/5. Its function is as follows. Catalyzes the transfer of the phosphoribosyl group of 5-phosphorylribose-1-pyrophosphate (PRPP) to anthranilate to yield N-(5'-phosphoribosyl)-anthranilate (PRA). The protein is Anthranilate phosphoribosyltransferase of Bacillus pumilus (strain SAFR-032).